We begin with the raw amino-acid sequence, 177 residues long: Transcription antitermination protein NusB (177 aa).

The disordered stretch occupies residues 1 to 35 (MTDSANPTPSARPPRQPRTGTTGTGARKAGSKSGR). Positions 17–28 (PRTGTTGTGARK) are enriched in low complexity.

The protein belongs to the NusB family.

Its function is as follows. Involved in transcription antitermination. Required for transcription of ribosomal RNA (rRNA) genes. Binds specifically to the boxA antiterminator sequence of the ribosomal RNA (rrn) operons. The chain is Transcription antitermination protein NusB from Acidovorax ebreus (strain TPSY) (Diaphorobacter sp. (strain TPSY)).